We begin with the raw amino-acid sequence, 445 residues long: Retrovirus-related Pol polyprotein from type-1 retrotransposable element R2 (445 aa).

The Reverse transcriptase domain maps to 1-114 (QPSVFNLVKW…LSRDDSLAKA (114 aa)). The segment at 115–445 (MLASAGPAAE…GATPRQLIEY (331 aa)) is nucleic acid-binding endonuclease. Residues 380-389 (GPRPAHHHQP) show a composition bias toward basic residues. The disordered stretch occupies residues 380-445 (GPRPAHHHQP…GATPRQLIEY (66 aa)). Positions 396 to 405 (ATANTGTLQS) are enriched in polar residues.

The catalysed reaction is DNA(n) + a 2'-deoxyribonucleoside 5'-triphosphate = DNA(n+1) + diphosphate. In Popillia japonica (Japanese beetle), this protein is Retrovirus-related Pol polyprotein from type-1 retrotransposable element R2.